The primary structure comprises 400 residues: Argininosuccinate synthase (400 aa).

ATP is bound by residues 10 to 18 (AYSGGVDTS) and alanine 38. Tyrosine 89 contributes to the L-citrulline binding site. Position 119 (glycine 119) interacts with ATP. 3 residues coordinate L-aspartate: threonine 121, asparagine 125, and aspartate 126. Position 125 (asparagine 125) interacts with L-citrulline. Positions 129, 177, 186, 262, and 274 each coordinate L-citrulline.

Belongs to the argininosuccinate synthase family. Type 1 subfamily. In terms of assembly, homotetramer.

The protein localises to the cytoplasm. It catalyses the reaction L-citrulline + L-aspartate + ATP = 2-(N(omega)-L-arginino)succinate + AMP + diphosphate + H(+). Its pathway is amino-acid biosynthesis; L-arginine biosynthesis; L-arginine from L-ornithine and carbamoyl phosphate: step 2/3. With respect to regulation, activity decreases to 53.9% and 18.4% in the presence of 1 mM and 5 mM arginine, respectively. Activity also decreases to 80.1%, 78.1% and 92.1% in the presence of 5 mM ornithine, lysine and succinate, respectively. Activity does not decrease in the presence of glutamate, glutamine or asparagine. Catalyzes the condensation of citrulline and aspartate into argininosuccinate, the immediate precursor of arginine. SyArgG is the rate-limiting step in arginine biosynthesis in Synechocystis PCC 6803. This is Argininosuccinate synthase from Synechocystis sp. (strain ATCC 27184 / PCC 6803 / Kazusa).